Reading from the N-terminus, the 604-residue chain is Prostaglandin G/H synthase 2 (604 aa).

Positions 1 to 17 are cleaved as a signal peptide; that stretch reads MLARALLLCAAVALSGA. The 38-residue stretch at 18-55 folds into the EGF-like domain; the sequence is ANPCCSHPCQNRGVCMSVGFDQYKCDCTRTGFYGENCT. Cystine bridges form between Cys-21–Cys-32, Cys-22–Cys-145, Cys-26–Cys-42, and Cys-44–Cys-54. Residue Asn-53 is glycosylated (N-linked (GlcNAc...) asparagine). Residue Arg-106 coordinates substrate. An N-linked (GlcNAc...) asparagine glycan is attached at Asn-130. His-193 functions as the Proton acceptor in the catalytic mechanism. Tyr-341 serves as a coordination point for substrate. The active-site For cyclooxygenase activity is Tyr-371. His-374 lines the heme b pocket. N-linked (GlcNAc...) asparagine glycosylation occurs at Asn-396. S-nitrosocysteine is present on Cys-526. Cys-555 and Cys-561 are oxidised to a cystine. Ser-565 is subject to O-acetylserine. Residue Asn-580 is glycosylated (N-linked (GlcNAc...) asparagine).

Belongs to the prostaglandin G/H synthase family. In terms of assembly, homodimer. Heme b serves as cofactor. In terms of processing, S-nitrosylation by NOS2 (iNOS) activates enzyme activity. S-nitrosylation may take place on different Cys residues in addition to Cys-526. Acetylated at Ser-565 by SPHK1. During neuroinflammation, acetylation by SPHK1 promotes neuronal secretion of specialized preresolving mediators (SPMs), especially 15-R-lipoxin A4, which results in an increase of phagocytic microglia.

It localises to the microsome membrane. The protein resides in the endoplasmic reticulum membrane. It is found in the nucleus inner membrane. The protein localises to the nucleus outer membrane. The catalysed reaction is (5Z,8Z,11Z,14Z)-eicosatetraenoate + AH2 + 2 O2 = prostaglandin H2 + A + H2O. The enzyme catalyses (5Z,8Z,11Z,14Z)-eicosatetraenoate + 2 O2 = prostaglandin G2. It catalyses the reaction prostaglandin G2 + AH2 = prostaglandin H2 + A + H2O. It carries out the reaction (5Z,8Z,11Z,14Z,17Z)-eicosapentaenoate + 2 O2 = prostaglandin G3. The catalysed reaction is prostaglandin G3 + AH2 = prostaglandin H3 + A + H2O. The enzyme catalyses (8Z,11Z,14Z)-eicosatrienoate + 2 O2 = prostaglandin G1. It catalyses the reaction prostaglandin G1 + AH2 = prostaglandin H1 + A + H2O. It carries out the reaction 2-(5Z,8Z,11Z,14Z)-eicosatetraenoyl-sn-glycero-3-phosphoethanolamine + 2 O2 = 2-(prostaglandin G2)-sn-glycero-3-phosphoethanolamine. The catalysed reaction is 2-(prostaglandin G2)-sn-glycero-3-phosphoethanolamine + AH2 = 2-(prostaglandin H2)-sn-glycero-3-phosphoethanolamine + A + H2O. The enzyme catalyses 2-(5Z,8Z,11Z,14Z)-eicosatetraenoyl-sn-glycero-3-phosphocholine + 2 O2 = 2-(prostaglandin G2)-sn-glycero-3-phosphocholine. It catalyses the reaction 2-(prostaglandin G2)-sn-glycero-3-phosphocholine + AH2 = 2-(prostaglandin H2)-sn-glycero-3-phosphocholine + A + H2O. It carries out the reaction (15S)-hydroperoxy-(5Z,8Z,11Z,13E)-eicosatetraenoate + AH2 = (15S)-hydroxy-(5Z,8Z,11Z,13E)-eicosatetraenoate + A + H2O. The catalysed reaction is 2-(5Z,8Z,11Z,14Z)-eicosatetraenoyl-sn-glycero-3-phosphocholine + AH2 + O2 = 2-[(15S)-hydroxy-(5Z,8Z,11Z,13E)-eicosatetraenoyl]-sn-glycero-3-phosphocholine + A + H2O. The enzyme catalyses 2-(5Z,8Z,11Z,14Z)-eicosatetraenoyl-sn-glycero-3-phosphocholine + AH2 + O2 = 2-[(15R)-hydroxy-(5Z,8Z,11Z,13E)-eicosatetraenoyl]-sn-glycero-3-phosphocholine + A + H2O. It catalyses the reaction 2-(5Z,8Z,11Z,14Z)-eicosatetraenoyl-sn-glycero-3-phosphocholine + AH2 + O2 = 2-[(11R)-hydroxy-(5Z,8Z,12E,14Z)-eicosatetraenoyl]-sn-glycero-3-phosphocholine + A + H2O. It carries out the reaction (9Z,12Z)-octadecadienoate + AH2 + O2 = 9-hydroxy-(10E,12Z)-octadecadienoate + A + H2O. The catalysed reaction is (9Z,12Z)-octadecadienoate + AH2 + O2 = 13-hydroxy-(9Z,11E)-octadecadienoate + A + H2O. The enzyme catalyses (5Z,8Z,11Z,14Z)-eicosatetraenoate + AH2 + O2 = (15R)-hydroxy-(5Z,8Z,11Z,13E)-eicosatetraenoate + A + H2O. It catalyses the reaction (5Z,8Z,11Z,14Z)-eicosatetraenoate + AH2 + O2 = (11R)-hydroxy-(5Z,8Z,12E,14Z)-eicosatetraenoate + A + H2O. It carries out the reaction (5Z,8Z,11Z,14Z,17Z)-eicosapentaenoate + AH2 + O2 = (11R)-hydroxy-(5Z,8Z,12E,14Z,17Z)-eicosapentaenoate + A + H2O. The catalysed reaction is (5Z,8Z,11Z,14Z,17Z)-eicosapentaenoate + AH2 + O2 = (18S)-hydroxy-(5Z,8Z,11Z,14Z,16E)-eicosapentaenoate + A + H2O. The enzyme catalyses (5Z,8Z,11Z,14Z,17Z)-eicosapentaenoate + AH2 + O2 = (18R)-hydroxy-(5Z,8Z,11Z,14Z,16E)-eicosapentaenoate + A + H2O. It catalyses the reaction (5Z,8Z,11Z,14Z,17Z)-eicosapentaenoate + AH2 + O2 = (15R)-hydroxy-(5Z,8Z,11Z,13E,17Z)-eicosapentaenoate + A + H2O. It carries out the reaction (5Z,8Z,11Z,14Z,17Z)-eicosapentaenoate + AH2 + O2 = (15S)-hydroxy-(5Z,8Z,11Z,13E,17Z)-eicosapentaenoate + A + H2O. The catalysed reaction is (7Z,10Z,13Z,16Z,19Z)-docosapentaenoate + AH2 + O2 = 13R-hydroxy-(7Z,10Z,14E,16Z,19Z)-docosapentaenoate + A + H2O. The enzyme catalyses (4Z,7Z,10Z,13Z,16Z,19Z)-docosahexaenoate + AH2 + O2 = 13-hydroxy-(4Z,7Z,10Z,14E,16Z,19Z)-docosahexaenoate + A + H2O. It catalyses the reaction (5S)-hydroxy-(6E,8Z,11Z,14Z)-eicosatetraenoate + AH2 + O2 = (5S,15R)-dihydroxy-(6E,8Z,11Z,13E)-eicosatetraenoate + A + H2O. It carries out the reaction (4Z,7Z,10Z,13Z,16Z,19Z)-docosahexaenoate + AH2 + O2 = 17R-hydroxy-(4Z,7Z,10Z,13Z,15E,19Z)-docosahexaenoate + A + H2O. The catalysed reaction is (5S)-hydroxy-(6E,8Z,11Z,14Z)-eicosatetraenoate + AH2 + O2 = (5S,15S)-dihydroxy-(6E,8Z,11Z,13E)-eicosatetraenoate + A + H2O. The enzyme catalyses (5S)-hydroxy-(6E,8Z,11Z,14Z)-eicosatetraenoate + AH2 + O2 = (5S,11R)-dihydroxy-(6E,8Z,12E,14Z)-eicosatetraenoate + A + H2O. It catalyses the reaction 2-(5Z,8Z,11Z,14Z-eicosatetraenoyl)-glycerol + 2 O2 = 2-glyceryl-prostaglandin G2. It carries out the reaction 2-glyceryl-prostaglandin G2 + AH2 = 2-glyceryl-prostaglandin H2 + A + H2O. The catalysed reaction is (5Z,8Z,11Z,14Z)-eicosatetraenoate + O2 = (15R)-hydroperoxy-(5Z,8Z,11Z,13E)-eicosatetraenoate. The enzyme catalyses (5Z,8Z,11Z,14Z)-eicosatetraenoate + O2 = 11R-hydroperoxy-(5Z,8Z,12E,14Z)-eicosatetraenoate. It catalyses the reaction (9Z,12Z)-octadecadienoate + AH2 + O2 = (9R)-hydroxy-(10E,12Z)-octadecadienoate + A + H2O. It carries out the reaction (9Z,12Z)-octadecadienoate + AH2 + O2 = (9S)-hydroxy-(10E,12Z)-octadecadienoate + A + H2O. The catalysed reaction is (9Z,12Z)-octadecadienoate + AH2 + O2 = (13S)-hydroxy-(9Z,11E)-octadecadienoate + A + H2O. The enzyme catalyses (9Z,12Z)-octadecadienoate + AH2 + O2 = (13R)-hydroxy-(9Z,11E)-octadecadienoate + A + H2O. The protein operates within lipid metabolism; prostaglandin biosynthesis. Functionally, dual cyclooxygenase and peroxidase in the biosynthesis pathway of prostanoids, a class of C20 oxylipins mainly derived from arachidonate ((5Z,8Z,11Z,14Z)-eicosatetraenoate, AA, C20:4(n-6)), with a particular role in the inflammatory response. The cyclooxygenase activity oxygenates AA to the hydroperoxy endoperoxide prostaglandin G2 (PGG2), and the peroxidase activity reduces PGG2 to the hydroxy endoperoxide prostaglandin H2 (PGH2), the precursor of all 2-series prostaglandins and thromboxanes. This complex transformation is initiated by abstraction of hydrogen at carbon 13 (with S-stereochemistry), followed by insertion of molecular O2 to form the endoperoxide bridge between carbon 9 and 11 that defines prostaglandins. The insertion of a second molecule of O2 (bis-oxygenase activity) yields a hydroperoxy group in PGG2 that is then reduced to PGH2 by two electrons. Similarly catalyzes successive cyclooxygenation and peroxidation of dihomo-gamma-linoleate (DGLA, C20:3(n-6)) and eicosapentaenoate (EPA, C20:5(n-3)) to corresponding PGH1 and PGH3, the precursors of 1- and 3-series prostaglandins. In an alternative pathway of prostanoid biosynthesis, converts 2-arachidonoyl lysophopholipids to prostanoid lysophopholipids, which are then hydrolyzed by intracellular phospholipases to release free prostanoids. Metabolizes 2-arachidonoyl glycerol yielding the glyceryl ester of PGH2, a process that can contribute to pain response. Generates lipid mediators from n-3 and n-6 polyunsaturated fatty acids (PUFAs) via a lipoxygenase-type mechanism. Oxygenates PUFAs to hydroperoxy compounds and then reduces them to corresponding alcohols. Plays a role in the generation of resolution phase interaction products (resolvins) during both sterile and infectious inflammation. Metabolizes docosahexaenoate (DHA, C22:6(n-3)) to 17R-HDHA, a precursor of the D-series resolvins (RvDs). As a component of the biosynthetic pathway of E-series resolvins (RvEs), converts eicosapentaenoate (EPA, C20:5(n-3)) primarily to 18S-HEPE that is further metabolized by ALOX5 and LTA4H to generate 18S-RvE1 and 18S-RvE2. In vascular endothelial cells, converts docosapentaenoate (DPA, C22:5(n-3)) to 13R-HDPA, a precursor for 13-series resolvins (RvTs) shown to activate macrophage phagocytosis during bacterial infection. In activated leukocytes, contributes to oxygenation of hydroxyeicosatetraenoates (HETE) to diHETES (5,15-diHETE and 5,11-diHETE). Can also use linoleate (LA, (9Z,12Z)-octadecadienoate, C18:2(n-6)) as substrate and produce hydroxyoctadecadienoates (HODEs) in a regio- and stereospecific manner, being (9R)-HODE ((9R)-hydroxy-(10E,12Z)-octadecadienoate) and (13S)-HODE ((13S)-hydroxy-(9Z,11E)-octadecadienoate) its major products. During neuroinflammation, plays a role in neuronal secretion of specialized preresolving mediators (SPMs) 15R-lipoxin A4 that regulates phagocytic microglia. The protein is Prostaglandin G/H synthase 2 (PTGS2) of Bos taurus (Bovine).